A 360-amino-acid chain; its full sequence is Sorbitol dehydrogenase (360 aa).

Cys42 serves as a coordination point for Zn(2+). Position 48 (Tyr48) interacts with substrate. Zn(2+)-binding residues include His67 and Glu68. Glu153 serves as a coordination point for substrate. Residues Asp201, Arg206, Ala277–Asn279, and Ser301–Arg303 contribute to the NAD(+) site. Substrate contacts are provided by Arg303 and Tyr304.

Belongs to the zinc-containing alcohol dehydrogenase family. In terms of assembly, homotetramer. Zn(2+) serves as cofactor.

The enzyme catalyses keto-D-fructose + NADH + H(+) = D-sorbitol + NAD(+). Polyol dehydrogenase that catalyzes the reversible NAD(+)-dependent oxidation of various sugar alcohols. Is active with D-sorbitol (D-glucitol) as substrate, leading to the C2-oxidized product D-fructose. Suppresses growth arrest induced by a p53 tumor mutant in fission yeast. The polypeptide is Sorbitol dehydrogenase (tms1) (Schizosaccharomyces pombe (strain 972 / ATCC 24843) (Fission yeast)).